Here is a 61-residue protein sequence, read N- to C-terminus: Large ribosomal subunit protein bL32 (61 aa).

A compositionally biased stretch (basic residues) spans Met1–Asn10. Positions Met1–Lys23 are disordered.

It belongs to the bacterial ribosomal protein bL32 family.

This chain is Large ribosomal subunit protein bL32, found in Gloeobacter violaceus (strain ATCC 29082 / PCC 7421).